The primary structure comprises 427 residues: 3-phosphoshikimate 1-carboxyvinyltransferase (427 aa).

Residues Lys-22, Ser-23, and Arg-27 each coordinate 3-phosphoshikimate. Residue Lys-22 coordinates phosphoenolpyruvate. Phosphoenolpyruvate-binding residues include Gly-96 and Arg-124. 3-phosphoshikimate is bound by residues Ser-169, Ser-170, Gln-171, Ser-197, Asp-313, Asn-336, and Lys-340. Phosphoenolpyruvate is bound at residue Gln-171. Residue Asp-313 is the Proton acceptor of the active site. 3 residues coordinate phosphoenolpyruvate: Arg-344, Arg-386, and Lys-411.

The protein belongs to the EPSP synthase family. Monomer.

Its subcellular location is the cytoplasm. The enzyme catalyses 3-phosphoshikimate + phosphoenolpyruvate = 5-O-(1-carboxyvinyl)-3-phosphoshikimate + phosphate. It participates in metabolic intermediate biosynthesis; chorismate biosynthesis; chorismate from D-erythrose 4-phosphate and phosphoenolpyruvate: step 6/7. Its function is as follows. Catalyzes the transfer of the enolpyruvyl moiety of phosphoenolpyruvate (PEP) to the 5-hydroxyl of shikimate-3-phosphate (S3P) to produce enolpyruvyl shikimate-3-phosphate and inorganic phosphate. The polypeptide is 3-phosphoshikimate 1-carboxyvinyltransferase (Escherichia coli O6:H1 (strain CFT073 / ATCC 700928 / UPEC)).